The sequence spans 60 residues: Metallothionein B (60 aa).

The segment at 1–28 is beta; the sequence is MDPCECSKSGTCNCGGSCTCTNCSCTSC. A divalent metal cation is bound by residues cysteine 4, cysteine 6, cysteine 12, cysteine 14, cysteine 18, cysteine 20, cysteine 23, cysteine 25, cysteine 28, cysteine 32, cysteine 33, cysteine 35, cysteine 36, cysteine 40, cysteine 43, cysteine 47, cysteine 49, cysteine 54, cysteine 58, and cysteine 59. Residues 29–60 are alpha; sequence KKSCCPCCPSGCTKCASGCVCKGKTCDTSCCQ.

This sequence belongs to the metallothionein superfamily. Type 1 family.

In terms of biological role, metallothioneins have a high content of cysteine residues that bind various heavy metals. This Trematomus bernacchii (Emerald rockcod) protein is Metallothionein B (mtb).